A 151-amino-acid chain; its full sequence is uncharacterized protein (151 aa).

4 consecutive transmembrane segments (helical) span residues 8-28 (GIGS…EFFE), 60-80 (WHVA…GVLT), 82-102 (FSAL…HADS), and 113-133 (LPLI…GKLS).

It belongs to the DoxX family.

It is found in the cell membrane. This is an uncharacterized protein from Haemophilus influenzae (strain ATCC 51907 / DSM 11121 / KW20 / Rd).